The following is a 1478-amino-acid chain: Zinc finger protein 518A (1478 aa).

4 C2H2-type zinc fingers span residues 152 to 174 (FPCE…RKTH), 209 to 231 (FQCE…IHRH), 236 to 258 (YKCG…LRVH), and 264 to 287 (FTCH…ITLH). The interval 355-394 (TQTKSEDQSQEQLNEEKGGRQHCEDGDKPIESGSEKATVL) is disordered. Residue K358 forms a Glycyl lysine isopeptide (Lys-Gly) (interchain with G-Cter in SUMO2) linkage. Positions 368–388 (NEEKGGRQHCEDGDKPIESGS) are enriched in basic and acidic residues. Residues K390 and K428 each participate in a glycyl lysine isopeptide (Lys-Gly) (interchain with G-Cter in SUMO2) cross-link. Residues 464 to 484 (PSPALQPNTEKESTANLPPQA) form a disordered region. K518 participates in a covalent cross-link: Glycyl lysine isopeptide (Lys-Gly) (interchain with G-Cter in SUMO2). Residue S652 is modified to Phosphoserine. The disordered stretch occupies residues 656–694 (VCENLQRESSNKTVTQQSTSDSDTTSPLRKESSNSDSLL). Low complexity predominate over residues 670–681 (TQQSTSDSDTTS). Glycyl lysine isopeptide (Lys-Gly) (interchain with G-Cter in SUMO2) cross-links involve residues K707, K792, K882, K895, K987, K1008, K1041, K1055, K1078, K1180, and K1441. The C2H2-type 5 zinc finger occupies 1444-1466 (FNCWFCGRVFDNQDVWAGHGQRH).

The protein belongs to the krueppel C2H2-type zinc-finger protein family.

The protein localises to the nucleus. In terms of biological role, through its association with the EHMT1-EHMT2/G9A and PRC2/EED-EZH2 histone methyltransferase complexes may function in gene silencing, regulating repressive post-translational methylation of histone tails at promoters of target genes. In Rattus norvegicus (Rat), this protein is Zinc finger protein 518A (Znf518a).